Here is a 412-residue protein sequence, read N- to C-terminus: Gamma-glutamyl phosphate reductase (412 aa).

Belongs to the gamma-glutamyl phosphate reductase family.

It is found in the cytoplasm. The catalysed reaction is L-glutamate 5-semialdehyde + phosphate + NADP(+) = L-glutamyl 5-phosphate + NADPH + H(+). The protein operates within amino-acid biosynthesis; L-proline biosynthesis; L-glutamate 5-semialdehyde from L-glutamate: step 2/2. Catalyzes the NADPH-dependent reduction of L-glutamate 5-phosphate into L-glutamate 5-semialdehyde and phosphate. The product spontaneously undergoes cyclization to form 1-pyrroline-5-carboxylate. This chain is Gamma-glutamyl phosphate reductase, found in Actinobacillus pleuropneumoniae serotype 3 (strain JL03).